The primary structure comprises 218 residues: Glutathione S-transferase Mu 1 (218 aa).

The GST N-terminal domain occupies 2-88 (PMILGYWNVR…YLARKHHLCG (87 aa)). Residues 7 to 8 (YW), 43 to 46 (RSQW), Lys-50, and 59 to 60 (NL) contribute to the glutathione site. At Ser-67 the chain carries Phosphoserine. 72–73 (QS) lines the glutathione pocket. The 119-residue stretch at 90-208 (TEEERIRADI…KSSRYLSTPI (119 aa)) folds into the GST C-terminal domain. Tyr-116 contacts substrate. Phosphoserine occurs at positions 205 and 210.

The protein belongs to the GST superfamily. Mu family. In terms of assembly, homodimer or heterodimer.

The protein localises to the cytoplasm. It catalyses the reaction RX + glutathione = an S-substituted glutathione + a halide anion + H(+). The enzyme catalyses prostaglandin A2 + glutathione = prostaglandin A2-S-(R)-glutathione. The catalysed reaction is prostaglandin J2 + glutathione = prostaglandin J2-S-(R)-glutathione. It carries out the reaction prostaglandin J2 + glutathione = prostaglandin J2-S-(S)-glutathione. It catalyses the reaction prostaglandin A2 + glutathione = prostaglandin A2-S-(S)-glutathione. The enzyme catalyses 11(S)-hydroxy-14(S),15(S)-epoxy-(5Z,8Z,12E)-eicosatrienoate + glutathione = (11S,15S)-dihydroxy-14(R)-S-glutathionyl-(5Z,8Z,12E)-eicosatrienoate. In terms of biological role, conjugation of reduced glutathione to a wide number of exogenous and endogenous hydrophobic electrophiles. The olfactory GST may be crucial for the acuity of the olfactory process. Participates in the formation of novel hepoxilin regioisomers. This is Glutathione S-transferase Mu 1 from Rattus norvegicus (Rat).